The following is a 192-amino-acid chain: Adenylate kinase (192 aa).

10–18 lines the ATP pocket; it reads GVPGVGGTT.

Belongs to the archaeal adenylate kinase family. In terms of assembly, monomer.

It localises to the cytoplasm. The catalysed reaction is AMP + ATP = 2 ADP. This is Adenylate kinase (adkA) from Methanotorris igneus (Methanococcus igneus).